The sequence spans 355 residues: Uroporphyrinogen decarboxylase (355 aa).

Substrate contacts are provided by residues 27–31, Phe46, Asp78, Tyr155, Ser210, and His328; that span reads RQAGR.

It belongs to the uroporphyrinogen decarboxylase family. In terms of assembly, homodimer.

The protein resides in the cytoplasm. It catalyses the reaction uroporphyrinogen III + 4 H(+) = coproporphyrinogen III + 4 CO2. It functions in the pathway porphyrin-containing compound metabolism; protoporphyrin-IX biosynthesis; coproporphyrinogen-III from 5-aminolevulinate: step 4/4. Functionally, catalyzes the decarboxylation of four acetate groups of uroporphyrinogen-III to yield coproporphyrinogen-III. The polypeptide is Uroporphyrinogen decarboxylase (Pseudomonas aeruginosa (strain ATCC 15692 / DSM 22644 / CIP 104116 / JCM 14847 / LMG 12228 / 1C / PRS 101 / PAO1)).